The following is a 425-amino-acid chain: CinA-like protein (425 aa).

This sequence belongs to the CinA family.

The chain is CinA-like protein from Shewanella sp. (strain MR-4).